We begin with the raw amino-acid sequence, 724 residues long: Small conductance calcium-activated potassium channel protein 3 (724 aa).

The segment covering Met-1–Gly-11 has biased composition (basic and acidic residues). Disordered stretches follow at residues Met-1 to Asn-161 and Ala-232 to Ala-251. Pro residues predominate over residues Gln-34 to Pro-58. Residues Gln-59–Pro-88 show a composition bias toward low complexity. Residues Pro-105 to Leu-125 are compositionally biased toward polar residues. Residues Gly-131 to Ser-140 are compositionally biased toward low complexity. Ser-160 is modified (phosphoserine). Residues Ala-232–Pro-249 show a composition bias toward polar residues. The helical transmembrane segment at Leu-281–Leu-301 threads the bilayer. A helical membrane pass occupies residues Phe-308–Ile-328. Residues Ile-359 to Trp-379 traverse the membrane as a helical segment. Residues Ile-398–His-418 form a helical membrane-spanning segment. Residues Leu-447–Ala-467 form a helical membrane-spanning segment. The pore-forming intramembrane region spans Phe-487–Val-507. A helical transmembrane segment spans residues Val-516–Ala-536. Positions Asp-554 to Val-630 are calmodulin-binding. The stretch at Ile-635–Ser-662 forms a coiled coil. The segment at Leu-702 to Cys-724 is disordered. Low complexity predominate over residues Ser-710–Cys-724.

The protein belongs to the potassium channel KCNN family. KCa2.3/KCNN3 subfamily. Homodimer. Heteromultimer with KCNN2 or KCNN1; this modulates plasma membrane expression and consequently the small conductance calcium-activated potassium channel activity. The complex is composed of 4 channel subunits each of which binds to a calmodulin subunit which regulates the channel activity through calcium-binding. Interacts with CALM1.

The protein resides in the cell membrane. It is found in the cytoplasm. The protein localises to the myofibril. Its subcellular location is the sarcomere. It localises to the z line. It carries out the reaction K(+)(in) = K(+)(out). With respect to regulation, inhibited by bee venom neurotoxin apamin. Its function is as follows. Small conductance calcium-activated potassium channel that mediates the voltage-independent transmembrane transfer of potassium across the cell membrane through a constitutive interaction with calmodulin which binds the intracellular calcium allowing its opening. The current is characterized by a voltage-independent activation, an intracellular calcium concentration increase-dependent activation and a single-channel conductance of 10 picosiemens. Also presents an inwardly rectifying current, thus reducing its already small outward conductance of potassium ions, which is particularly the case when the membrane potential displays positive values, above + 20 mV. Activation is followed by membrane hyperpolarization. Thought to regulate neuronal excitability by contributing to the slow component of synaptic afterhyperpolarization. The protein is Small conductance calcium-activated potassium channel protein 3 of Sus scrofa (Pig).